We begin with the raw amino-acid sequence, 317 residues long: Apolipoprotein E (317 aa).

Positions 1–18 are cleaved as a signal peptide; sequence MKVLWAALLVTFLAGCQA. 8 repeat units span residues 80-101, 102-123, 124-145, 146-167, 168-189, 190-211, 212-233, and 234-255. An 8 X 22 AA approximate tandem repeats region spans residues 80 to 255; that stretch reads TLMDETMKEL…RLDEVKEQVA (176 aa). Met-143 is modified (methionine sulfoxide). Ser-147 is modified (phosphoserine). The LDL and other lipoprotein receptors binding stretch occupies residues 158 to 168; that stretch reads HLRKLRKRLLR. Position 162–165 (162–165) interacts with heparin; sequence LRKR. The lipid-binding and lipoprotein association stretch occupies residues 210–290; it reads AATVGSLASQ…SWFEPLVEDM (81 aa). 229–236 contacts heparin; that stretch reads GERLRARM. The tract at residues 266–317 is homooligomerization; sequence QQISLQAEAFQARLKSWFEPLVEDMQRQWAGLVEKVQAAVGASTAPVPIDNH. The interval 278-290 is specificity for association with VLDL; sequence RLKSWFEPLVEDM.

The protein belongs to the apolipoprotein A1/A4/E family. Homotetramer. May interact with ABCA1; functionally associated with ABCA1 in the biogenesis of HDLs. May interact with APP/A4 amyloid-beta peptide; the interaction is extremely stable in vitro but its physiological significance is unclear. May interact with MAPT. May interact with MAP2. In the cerebrospinal fluid, interacts with secreted SORL1. Interacts with PMEL; this allows the loading of PMEL luminal fragment on ILVs to induce fibril nucleation. Post-translationally, APOE exists as multiple glycosylated and sialylated glycoforms within cells and in plasma. The extent of glycosylation and sialylation are tissue and context specific. In terms of processing, glycated in plasma VLDL. Phosphorylated by FAM20C in the extracellular medium.

The protein resides in the secreted. It is found in the extracellular space. Its subcellular location is the extracellular matrix. The protein localises to the extracellular vesicle. It localises to the endosome. The protein resides in the multivesicular body. Functionally, APOE is an apolipoprotein, a protein associating with lipid particles, that mainly functions in lipoprotein-mediated lipid transport between organs via the plasma and interstitial fluids. APOE is a core component of plasma lipoproteins and is involved in their production, conversion and clearance. Apolipoproteins are amphipathic molecules that interact both with lipids of the lipoprotein particle core and the aqueous environment of the plasma. As such, APOE associates with chylomicrons, chylomicron remnants, very low density lipoproteins (VLDL) and intermediate density lipoproteins (IDL) but shows a preferential binding to high-density lipoproteins (HDL). It also binds a wide range of cellular receptors including the LDL receptor/LDLR, the LDL receptor-related proteins LRP1, LRP2 and LRP8 and the very low-density lipoprotein receptor/VLDLR that mediate the cellular uptake of the APOE-containing lipoprotein particles. Finally, APOE also has a heparin-binding activity and binds heparan-sulfate proteoglycans on the surface of cells, a property that supports the capture and the receptor-mediated uptake of APOE-containing lipoproteins by cells. A main function of APOE is to mediate lipoprotein clearance through the uptake of chylomicrons, VLDLs, and HDLs by hepatocytes. APOE is also involved in the biosynthesis by the liver of VLDLs as well as their uptake by peripheral tissues ensuring the delivery of triglycerides and energy storage in muscle, heart and adipose tissues. By participating in the lipoprotein-mediated distribution of lipids among tissues, APOE plays a critical role in plasma and tissues lipid homeostasis. APOE is also involved in two steps of reverse cholesterol transport, the HDLs-mediated transport of cholesterol from peripheral tissues to the liver, and thereby plays an important role in cholesterol homeostasis. First, it is functionally associated with ABCA1 in the biogenesis of HDLs in tissues. Second, it is enriched in circulating HDLs and mediates their uptake by hepatocytes. APOE also plays an important role in lipid transport in the central nervous system, regulating neuron survival and sprouting. The protein is Apolipoprotein E (APOE) of Macaca fascicularis (Crab-eating macaque).